Consider the following 407-residue polypeptide: Succinyl-diaminopimelate desuccinylase (407 aa).

A compositionally biased stretch (polar residues) spans 1 to 10; the sequence is MSDIDNNLTS. The segment at 1-20 is disordered; that stretch reads MSDIDNNLTSQTHQQATHQQ. Over residues 11-20 the composition is skewed to low complexity; the sequence is QTHQQATHQQ. Histidine 93 lines the Zn(2+) pocket. Residue aspartate 95 is part of the active site. Zn(2+) is bound at residue aspartate 126. Glutamate 160 serves as the catalytic Proton acceptor. The Zn(2+) site is built by glutamate 161, glutamate 189, and histidine 379.

It belongs to the peptidase M20A family. DapE subfamily. In terms of assembly, homodimer. Zn(2+) is required as a cofactor. Co(2+) serves as cofactor.

It carries out the reaction N-succinyl-(2S,6S)-2,6-diaminopimelate + H2O = (2S,6S)-2,6-diaminopimelate + succinate. The protein operates within amino-acid biosynthesis; L-lysine biosynthesis via DAP pathway; LL-2,6-diaminopimelate from (S)-tetrahydrodipicolinate (succinylase route): step 3/3. Catalyzes the hydrolysis of N-succinyl-L,L-diaminopimelic acid (SDAP), forming succinate and LL-2,6-diaminopimelate (DAP), an intermediate involved in the bacterial biosynthesis of lysine and meso-diaminopimelic acid, an essential component of bacterial cell walls. This Psychrobacter arcticus (strain DSM 17307 / VKM B-2377 / 273-4) protein is Succinyl-diaminopimelate desuccinylase.